A 283-amino-acid polypeptide reads, in one-letter code: MQINVVKTFLFALAASSVSALAVDTEFRCGAPEPSEELIEASAIMAVAEAEAAANGTLAARQSALTIDTYVHVVATSTSASAGYLSDATIQQQLRVMNEDYAPSGIQFVLKGTDRTVNANWARDSGETAMKTALRKGTYKDLNLYFLSSIPGGILGYCYFPASATTSTVRLDGCTIASGTVPGGSISRFNLGKTAVHEVGHWFGLYHTFQGGCNGQGDLVDDTPAQASASSGCPIGRDSCPNQPGLDPIHNYMDYSDDSCYEEFTPGQNARMSSMFAQFRAGK.

The signal sequence occupies residues 1–22 (MQINVVKTFLFALAASSVSALA). Asn-55 carries an N-linked (GlcNAc...) asparagine glycan. A Zn(2+)-binding site is contributed by His-197. Glu-198 is a catalytic residue. His-201 lines the Zn(2+) pocket. Cys-233 and Cys-260 are disulfide-bonded.

The protein belongs to the peptidase M43B family.

It is found in the secreted. Secreted metalloproteinase that allows assimilation of proteinaceous substrates. The protein is Extracellular metalloprotease MGG_08041 of Pyricularia oryzae (strain 70-15 / ATCC MYA-4617 / FGSC 8958) (Rice blast fungus).